We begin with the raw amino-acid sequence, 30 residues long: Trypsin inhibitor 2 (30 aa).

Disulfide bonds link C3-C20, C10-C22, and C16-C29.

This sequence belongs to the protease inhibitor I7 (squash-type serine protease inhibitor) family.

It is found in the secreted. In terms of biological role, inhibits trypsin. The chain is Trypsin inhibitor 2 from Luffa aegyptiaca (Sponge gourd).